A 317-amino-acid chain; its full sequence is MRSSRSAKVSLVGAGNIGGALAHMLGASQVVKELVLVDVAGGMTEGKVLDVGQALALLGSDVYITGGSDYAAIEHSDAVVVTAGIPRKEGMSREDLLNTNAAVVRNIAENIAKYSPGALVIVVTNPLDAMVWCMYKYSGLPANRVVGMAGVLDSARFSFFLARHMNVSVSSVSAMVLGGHGDLMLPLLRYSTVGGVPVESLIESGRLNRDDIAAIVERTRKGGEEIVKLLKTGSAYCAPAASCAHMLESYVRDKRSIMPCSAYLDGQYGVRDLFVGVPVIIGEKGVEEVVEFPLTAEEQAVFDQSVELIRGSVSAIS.

NAD(+) is bound by residues 13–18 and Asp-38; that span reads GAGNIG. Arg-87 and Arg-93 together coordinate substrate. Residues Asn-100 and 123–125 contribute to the NAD(+) site; that span reads VTN. Positions 125 and 156 each coordinate substrate. His-180 (proton acceptor) is an active-site residue.

Belongs to the LDH/MDH superfamily. MDH type 3 family.

The catalysed reaction is (S)-malate + NAD(+) = oxaloacetate + NADH + H(+). Functionally, catalyzes the reversible oxidation of malate to oxaloacetate. The chain is Malate dehydrogenase from Anaplasma marginale (strain St. Maries).